We begin with the raw amino-acid sequence, 123 residues long: Large ribosomal subunit protein uL14 (123 aa).

This sequence belongs to the universal ribosomal protein uL14 family. Part of the 50S ribosomal subunit. Forms a cluster with proteins L3 and L19. In the 70S ribosome, L14 and L19 interact and together make contacts with the 16S rRNA in bridges B5 and B8.

Its function is as follows. Binds to 23S rRNA. Forms part of two intersubunit bridges in the 70S ribosome. The protein is Large ribosomal subunit protein uL14 of Zymomonas mobilis subsp. mobilis (strain ATCC 31821 / ZM4 / CP4).